We begin with the raw amino-acid sequence, 200 residues long: Large ribosomal subunit protein uL4 (200 aa).

The interval 42-65 (TRAQKTRSEVSGGGAKPWRQKGTG) is disordered.

This sequence belongs to the universal ribosomal protein uL4 family. As to quaternary structure, part of the 50S ribosomal subunit.

In terms of biological role, one of the primary rRNA binding proteins, this protein initially binds near the 5'-end of the 23S rRNA. It is important during the early stages of 50S assembly. It makes multiple contacts with different domains of the 23S rRNA in the assembled 50S subunit and ribosome. Forms part of the polypeptide exit tunnel. The polypeptide is Large ribosomal subunit protein uL4 (Vibrio atlanticus (strain LGP32) (Vibrio splendidus (strain Mel32))).